Reading from the N-terminus, the 162-residue chain is Cyanate hydratase (162 aa).

Residues R102, E105, and S128 contribute to the active site.

This sequence belongs to the cyanase family.

It catalyses the reaction cyanate + hydrogencarbonate + 3 H(+) = NH4(+) + 2 CO2. Functionally, catalyzes the reaction of cyanate with bicarbonate to produce ammonia and carbon dioxide. The polypeptide is Cyanate hydratase (Mycosarcoma maydis (Corn smut fungus)).